A 143-amino-acid chain; its full sequence is Large ribosomal subunit protein uL11 (143 aa).

The protein belongs to the universal ribosomal protein uL11 family. In terms of assembly, part of the ribosomal stalk of the 50S ribosomal subunit. Interacts with L10 and the large rRNA to form the base of the stalk. L10 forms an elongated spine to which L12 dimers bind in a sequential fashion forming a multimeric L10(L12)X complex. Post-translationally, one or more lysine residues are methylated.

In terms of biological role, forms part of the ribosomal stalk which helps the ribosome interact with GTP-bound translation factors. The polypeptide is Large ribosomal subunit protein uL11 (Burkholderia cenocepacia (strain HI2424)).